Here is a 293-residue protein sequence, read N- to C-terminus: 4-hydroxy-tetrahydrodipicolinate synthase (293 aa).

A pyruvate-binding site is contributed by threonine 44. The active-site Proton donor/acceptor is the tyrosine 132. Lysine 160 acts as the Schiff-base intermediate with substrate in catalysis. Position 204 (isoleucine 204) interacts with pyruvate.

This sequence belongs to the DapA family. Homotetramer; dimer of dimers.

Its subcellular location is the cytoplasm. The enzyme catalyses L-aspartate 4-semialdehyde + pyruvate = (2S,4S)-4-hydroxy-2,3,4,5-tetrahydrodipicolinate + H2O + H(+). Its pathway is amino-acid biosynthesis; L-lysine biosynthesis via DAP pathway; (S)-tetrahydrodipicolinate from L-aspartate: step 3/4. Catalyzes the condensation of (S)-aspartate-beta-semialdehyde [(S)-ASA] and pyruvate to 4-hydroxy-tetrahydrodipicolinate (HTPA). In Hyphomonas neptunium (strain ATCC 15444), this protein is 4-hydroxy-tetrahydrodipicolinate synthase.